The chain runs to 515 residues: Probable cytosol aminopeptidase (515 aa).

Residues Lys-279 and Asp-284 each coordinate Mn(2+). The active site involves Lys-291. 3 residues coordinate Mn(2+): Asp-302, Asp-361, and Glu-363. Arg-365 is an active-site residue.

Belongs to the peptidase M17 family. Mn(2+) is required as a cofactor.

The protein resides in the cytoplasm. The catalysed reaction is Release of an N-terminal amino acid, Xaa-|-Yaa-, in which Xaa is preferably Leu, but may be other amino acids including Pro although not Arg or Lys, and Yaa may be Pro. Amino acid amides and methyl esters are also readily hydrolyzed, but rates on arylamides are exceedingly low.. The enzyme catalyses Release of an N-terminal amino acid, preferentially leucine, but not glutamic or aspartic acids.. In terms of biological role, presumably involved in the processing and regular turnover of intracellular proteins. Catalyzes the removal of unsubstituted N-terminal amino acids from various peptides. This is Probable cytosol aminopeptidase from Mycobacterium tuberculosis (strain ATCC 25177 / H37Ra).